We begin with the raw amino-acid sequence, 617 residues long: 1-deoxy-D-xylulose-5-phosphate synthase (617 aa).

Thiamine diphosphate contacts are provided by residues H76 and 117 to 119 (GHS). D148 is a binding site for Mg(2+). Residues 149–150 (GA), N177, Y285, and E366 contribute to the thiamine diphosphate site. N177 contacts Mg(2+).

Belongs to the transketolase family. DXPS subfamily. Homodimer. Mg(2+) is required as a cofactor. Thiamine diphosphate serves as cofactor.

The catalysed reaction is D-glyceraldehyde 3-phosphate + pyruvate + H(+) = 1-deoxy-D-xylulose 5-phosphate + CO2. It participates in metabolic intermediate biosynthesis; 1-deoxy-D-xylulose 5-phosphate biosynthesis; 1-deoxy-D-xylulose 5-phosphate from D-glyceraldehyde 3-phosphate and pyruvate: step 1/1. In terms of biological role, catalyzes the acyloin condensation reaction between C atoms 2 and 3 of pyruvate and glyceraldehyde 3-phosphate to yield 1-deoxy-D-xylulose-5-phosphate (DXP). The sequence is that of 1-deoxy-D-xylulose-5-phosphate synthase from Mannheimia succiniciproducens (strain KCTC 0769BP / MBEL55E).